Reading from the N-terminus, the 449-residue chain is Anthocyanidin 3-O-glucosyltransferase 1 (449 aa).

His3 (proton acceptor) is an active-site residue. Position 3 (His3) interacts with an anthocyanidin. Asp103 (charge relay) is an active-site residue. Residues Thr125, Ala325, Gln327, His342, Trp345, Asn346, Ser347, and Glu350 each contribute to the UDP-alpha-D-glucose site. An an anthocyanidin-binding site is contributed by Ala365. 2 residues coordinate UDP-alpha-D-glucose: Glu366 and Gln367.

This sequence belongs to the UDP-glycosyltransferase family. As to expression, expressed in cotyledons and roots, but not in leaves.

It catalyses the reaction an anthocyanidin + UDP-alpha-D-glucose + H(+) = an anthocyanidin 3-O-beta-D-glucoside + UDP. It participates in pigment biosynthesis; anthocyanin biosynthesis. In terms of biological role, in the presence of other necessary color factors, this glycosylation reaction allows the accumulation of anthocyanin pigments. The chain is Anthocyanidin 3-O-glucosyltransferase 1 (GT1) from Manihot esculenta (Cassava).